The primary structure comprises 414 residues: Acyltransferase MYCGRDRAFT_85486 (414 aa).

The span at 16-25 (DGTSTVTIRP) shows a compositional bias: polar residues. The interval 16–47 (DGTSTVTIRPTQKAAPSEEPSQDTAPSKKDSN) is disordered. Histidine 329 contacts substrate. The Proton acceptor role is filled by glutamate 367.

Belongs to the lysine N-acyltransferase mbtK family.

Its pathway is siderophore biosynthesis. Functionally, acyltransferase; part of the gene cluster 14 that mediates the biosynthesis of a ferrichrome A-like siderophore which may contribute to organismal virulence. The first step of siderophore biosynthesis is performed by the HMG-CoA synthase (HMGS) MYCGRDRAFT_54740 which catalyzes the generation of HMG-CoA and CoA using acetoacetyl-CoA and acetyl-CoA as substrates. The enoyl-CoA isomerase/hydratase MYCGRDRAFT_76805 then catalyzes the conversion of HMG-CoA to methylglutaconyl-CoA. The acyltransferase MYCGRDRAFT_85486 then fuses methylglutaconyl-CoA with hydroxyornithine to yield methylglutaconyl hydroxyornithine. Methylglutaconyl hydroxyornithine is then available for use by the nonribosomal peptide synthetase NRPS2 to generate the ferrichrome A-like siderophore. In Zymoseptoria tritici (strain CBS 115943 / IPO323) (Speckled leaf blotch fungus), this protein is Acyltransferase MYCGRDRAFT_85486.